The following is a 225-amino-acid chain: Platelet-activating factor acetylhydrolase IB subunit beta homolog (225 aa).

Belongs to the 'GDSL' lipolytic enzyme family. Platelet-activating factor acetylhydrolase IB beta/gamma subunits subfamily. Does not interact with Lis-1.

The protein is Platelet-activating factor acetylhydrolase IB subunit beta homolog (Paf-AHalpha) of Drosophila melanogaster (Fruit fly).